The chain runs to 238 residues: Dolichyldiphosphatase 1 (238 aa).

The next 4 helical transmembrane spans lie at 33–53 (LAYL…LIIF), 100–120 (PSSH…FLYL), 130–150 (FLDL…AFLV), and 162–182 (WSQV…WFII).

The protein belongs to the dolichyldiphosphatase family. As to expression, widely expressed with highest levels in brain, kidney, lung and intestine.

The protein resides in the endoplasmic reticulum membrane. It catalyses the reaction a di-trans,poly-cis-dolichyl diphosphate + H2O = a di-trans,poly-cis-dolichyl phosphate + phosphate + H(+). The protein operates within protein modification; protein glycosylation. Its function is as follows. Required for efficient N-glycosylation. Necessary for maintaining optimal levels of dolichol-linked oligosaccharides. Hydrolyzes dolichyl pyrophosphate at a very high rate and dolichyl monophosphate at a much lower rate. Does not act on phosphatidate. This Mus musculus (Mouse) protein is Dolichyldiphosphatase 1 (Dolpp1).